The sequence spans 367 residues: DNA-directed RNA polymerase II subunit GRINL1A (367 aa).

Residues 15–40 adopt a coiled-coil conformation; sequence DLERRSLAELREMLKRQERLLRNEKF. The interval 29–68 is important for transcription repressor activity; it reads KRQERLLRNEKFICKLPDKGKKIFDSFAKLKAAIAECEEV. 3 stretches are compositionally biased toward polar residues: residues 117 to 131, 176 to 185, and 205 to 225; these read SVDN…QNQG, RVSSQAEDTS, and GEQQ…SGTQ. Disordered regions lie at residues 117–185, 203–225, and 254–281; these read SVDN…EDTS, DQGE…SGTQ, and PFRQ…RRDK. Residues 226-297 form an interaction with Pol II region; that stretch reads KKPHYMEVLE…TAARLLPLHH (72 aa). The residue at position 269 (S269) is a Phosphoserine. Residues 298–313 form an important for transcription repressor activity region; sequence MPTQLLSIEESLALQK. Residues 300–329 adopt a coiled-coil conformation; that stretch reads TQLLSIEESLALQKQRKQKYEEMQAKLAAQ. Positions 314-339 are interaction with Pol II; the sequence is QRKQKYEEMQAKLAAQKLAERLNIKM. The tract at residues 335–367 is disordered; that stretch reads LNIKMRSYNPEGESSGRYREVRDEDDDWSSDEF. The segment covering 357–367 has biased composition (acidic residues); that stretch reads DEDDDWSSDEF.

Belongs to the GRINL1 family. In terms of assembly, component of the Pol II(G) complex, which contains the RNA polymerase II (Pol II) core complex subunits and POLR2M isoform 1. Pol II(G) appears to be an abundant form of Pol II. In terms of processing, dephosphorylated at Ser-269 by the PNUTS-PP1 complex, promoting RNA polymerase II transcription pause-release.

The protein resides in the nucleus. Appears to be a stable component of the Pol II(G) complex form of RNA polymerase II (Pol II). Pol II synthesizes mRNA precursors and many functional non-coding RNAs and is the central component of the basal RNA polymerase II transcription machinery. May play a role in the Mediator complex-dependent regulation of transcription activation. Acts as a negative regulator of transcriptional activation; this repression is relieved by the Mediator complex, which restores Pol II(G) activator-dependent transcription to a level equivalent to that of Pol II. The protein is DNA-directed RNA polymerase II subunit GRINL1A (POLR2M) of Pongo abelii (Sumatran orangutan).